The primary structure comprises 224 residues: Uridylate kinase (224 aa).

Position 6–10 (6–10) interacts with ATP; that stretch reads KVTGK. Residue glycine 41 coordinates UMP. ATP is bound by residues glycine 42 and arginine 46. Residues aspartate 63 and 111–117 each bind UMP; that span reads FQPGQST. The ATP site is built by threonine 137, phenylalanine 143, and aspartate 146.

Belongs to the UMP kinase family. Homohexamer.

The protein localises to the cytoplasm. The catalysed reaction is UMP + ATP = UDP + ADP. It participates in pyrimidine metabolism; CTP biosynthesis via de novo pathway; UDP from UMP (UMPK route): step 1/1. Its activity is regulated as follows. Inhibited by UTP. Functionally, catalyzes the reversible phosphorylation of UMP to UDP. The sequence is that of Uridylate kinase from Metallosphaera sedula (strain ATCC 51363 / DSM 5348 / JCM 9185 / NBRC 15509 / TH2).